A 968-amino-acid polypeptide reads, in one-letter code: RNA polymerase-associated protein RapA (968 aa).

One can recognise a Helicase ATP-binding domain in the interval D164 to S334. D177–T184 provides a ligand contact to ATP. A DEAH box motif is present at residues D280 to H283. The 155-residue stretch at R490–D644 folds into the Helicase C-terminal domain.

Belongs to the SNF2/RAD54 helicase family. RapA subfamily. As to quaternary structure, interacts with the RNAP. Has a higher affinity for the core RNAP than for the holoenzyme. Its ATPase activity is stimulated by binding to RNAP.

Functionally, transcription regulator that activates transcription by stimulating RNA polymerase (RNAP) recycling in case of stress conditions such as supercoiled DNA or high salt concentrations. Probably acts by releasing the RNAP, when it is trapped or immobilized on tightly supercoiled DNA. Does not activate transcription on linear DNA. Probably not involved in DNA repair. This Citrobacter koseri (strain ATCC BAA-895 / CDC 4225-83 / SGSC4696) protein is RNA polymerase-associated protein RapA.